A 746-amino-acid chain; its full sequence is Serine/threonine-protein kinase SMU1 (746 aa).

Disordered regions lie at residues 1–138 and 155–212; these read MSLV…DTLH and QRSH…GSRN. Low complexity-rich tracts occupy residues 15–54 and 85–105; these read SSAN…SSTT and SVSS…PSSA. 3 stretches are compositionally biased toward polar residues: residues 106–121, 128–138, and 156–176; these read LPWS…STAT, RSNTAGPDTLH, and RSHS…SSPT. The segment covering 194–203 has biased composition (basic and acidic residues); it reads PSRDRERSRD. One can recognise a CRIB domain in the interval 237–250; the sequence is ISTPYDPVHLTHVG. Residues 301–451 are disordered; the sequence is GGSDVWKKMG…RRETKKSTIK (151 aa). The span at 370-380 shows a compositional bias: polar residues; the sequence is PPSNASTSSAD. Low complexity predominate over residues 414–430; it reads SPASRAPDAPAAVSAAS. The 252-residue stretch at 472–723 folds into the Protein kinase domain; that stretch reads YRSLQKIGQG…ALGMLAHPFL (252 aa). ATP-binding positions include 478-486 and Lys-501; that span reads IGQGASGGV. Catalysis depends on Asp-591, which acts as the Proton acceptor.

It belongs to the protein kinase superfamily. STE Ser/Thr protein kinase family. STE20 subfamily.

The protein localises to the cytoplasm. It is found in the nucleus. It catalyses the reaction L-seryl-[protein] + ATP = O-phospho-L-seryl-[protein] + ADP + H(+). It carries out the reaction L-threonyl-[protein] + ATP = O-phospho-L-threonyl-[protein] + ADP + H(+). MAP4K component of the MAPK pathway required for the mating pheromone response and the regulation of cell polarity and cell cycle. Phosphorylates histone H2B to form H2BS10ph. The sequence is that of Serine/threonine-protein kinase SMU1 (SMU1) from Mycosarcoma maydis (Corn smut fungus).